Here is a 291-residue protein sequence, read N- to C-terminus: tRNA U34 carboxymethyltransferase (291 aa).

Carboxy-S-adenosyl-L-methionine-binding positions include lysine 61, tryptophan 75, lysine 80, glycine 100, 122–124 (DPS), 149–150 (VE), tyrosine 169, and arginine 284.

The protein belongs to the class I-like SAM-binding methyltransferase superfamily. CmoB family. In terms of assembly, homotetramer.

The enzyme catalyses carboxy-S-adenosyl-L-methionine + 5-hydroxyuridine(34) in tRNA = 5-carboxymethoxyuridine(34) in tRNA + S-adenosyl-L-homocysteine + H(+). In terms of biological role, catalyzes carboxymethyl transfer from carboxy-S-adenosyl-L-methionine (Cx-SAM) to 5-hydroxyuridine (ho5U) to form 5-carboxymethoxyuridine (cmo5U) at position 34 in tRNAs. The sequence is that of tRNA U34 carboxymethyltransferase from Campylobacter jejuni subsp. doylei (strain ATCC BAA-1458 / RM4099 / 269.97).